A 210-amino-acid polypeptide reads, in one-letter code: Probable GTP-binding protein EngB (210 aa).

The EngB-type G domain occupies 25–199 (TGIEVAFAGR…RQKLDTWFSE (175 aa)). Residues 33 to 40 (GRSNAGKS), 60 to 64 (GRTQL), 78 to 81 (DLPG), 145 to 148 (TKAD), and 178 to 180 (FSS) each bind GTP. Mg(2+) contacts are provided by Ser40 and Thr62.

This sequence belongs to the TRAFAC class TrmE-Era-EngA-EngB-Septin-like GTPase superfamily. EngB GTPase family. It depends on Mg(2+) as a cofactor.

Its function is as follows. Necessary for normal cell division and for the maintenance of normal septation. This chain is Probable GTP-binding protein EngB, found in Shigella flexneri.